The chain runs to 209 residues: Holliday junction branch migration complex subunit RuvA (209 aa).

Residues 1-64 (MIGKLKGLVD…EDSIKLYGFA (64 aa)) are domain I. The interval 65–143 (SETEREWFRL…ALGASLHTLA (79 aa)) is domain II. The tract at residues 144-154 (GAGSEGAGVEA) is flexible linker. A domain III region spans residues 155-209 (PASGAVSDAISVLVNLGFGRSQAAVAVAASSKALGSGAGAGDLAKRALQELAQSG).

The protein belongs to the RuvA family. As to quaternary structure, homotetramer. Forms an RuvA(8)-RuvB(12)-Holliday junction (HJ) complex. HJ DNA is sandwiched between 2 RuvA tetramers; dsDNA enters through RuvA and exits via RuvB. An RuvB hexamer assembles on each DNA strand where it exits the tetramer. Each RuvB hexamer is contacted by two RuvA subunits (via domain III) on 2 adjacent RuvB subunits; this complex drives branch migration. In the full resolvosome a probable DNA-RuvA(4)-RuvB(12)-RuvC(2) complex forms which resolves the HJ.

Its subcellular location is the cytoplasm. Its function is as follows. The RuvA-RuvB-RuvC complex processes Holliday junction (HJ) DNA during genetic recombination and DNA repair, while the RuvA-RuvB complex plays an important role in the rescue of blocked DNA replication forks via replication fork reversal (RFR). RuvA specifically binds to HJ cruciform DNA, conferring on it an open structure. The RuvB hexamer acts as an ATP-dependent pump, pulling dsDNA into and through the RuvAB complex. HJ branch migration allows RuvC to scan DNA until it finds its consensus sequence, where it cleaves and resolves the cruciform DNA. This chain is Holliday junction branch migration complex subunit RuvA, found in Methylocella silvestris (strain DSM 15510 / CIP 108128 / LMG 27833 / NCIMB 13906 / BL2).